The sequence spans 177 residues: Protein-export protein SecB (177 aa).

The tract at residues 1–22 (MSDENNSGAAAPEAQNPGQNAA) is disordered. Over residues 8 to 22 (GAAAPEAQNPGQNAA) the composition is skewed to low complexity.

It belongs to the SecB family. As to quaternary structure, homotetramer, a dimer of dimers. One homotetramer interacts with 1 SecA dimer.

It is found in the cytoplasm. One of the proteins required for the normal export of preproteins out of the cell cytoplasm. It is a molecular chaperone that binds to a subset of precursor proteins, maintaining them in a translocation-competent state. It also specifically binds to its receptor SecA. In Paracoccus denitrificans (strain Pd 1222), this protein is Protein-export protein SecB.